A 478-amino-acid polypeptide reads, in one-letter code: Dihydrolipoyl dehydrogenase (478 aa).

Residues 36–45 (ERYSTLGGVC), K54, and A117 each bind FAD. A disulfide bond links C45 and C50. Residues 183-187 (GGGII), E206, V239, and 270-273 (AIGR) contribute to the NAD(+) site. D313 and A321 together coordinate FAD. The active-site Proton acceptor is H445.

The protein belongs to the class-I pyridine nucleotide-disulfide oxidoreductase family. Homodimer. It depends on FAD as a cofactor.

It localises to the cytoplasm. The enzyme catalyses N(6)-[(R)-dihydrolipoyl]-L-lysyl-[protein] + NAD(+) = N(6)-[(R)-lipoyl]-L-lysyl-[protein] + NADH + H(+). Lipoamide dehydrogenase is a component of the alpha-ketoacid dehydrogenase complexes. The protein is Dihydrolipoyl dehydrogenase (lpdA) of Haemophilus influenzae (strain ATCC 51907 / DSM 11121 / KW20 / Rd).